Reading from the N-terminus, the 88-residue chain is Small ribosomal subunit protein eS25B (88 aa).

The protein belongs to the eukaryotic ribosomal protein eS25 family. Component of the small ribosomal subunit (SSU). Mature yeast ribosomes consist of a small (40S) and a large (60S) subunit. The 40S small subunit contains 1 molecule of ribosomal RNA (18S rRNA) and at least 33 different proteins. The large 60S subunit contains 3 rRNA molecules (25S, 5.8S and 5S rRNA) and at least 46 different proteins.

The protein localises to the cytoplasm. In terms of biological role, component of the ribosome, a large ribonucleoprotein complex responsible for the synthesis of proteins in the cell. The small ribosomal subunit (SSU) binds messenger RNAs (mRNAs) and translates the encoded message by selecting cognate aminoacyl-transfer RNA (tRNA) molecules. The large subunit (LSU) contains the ribosomal catalytic site termed the peptidyl transferase center (PTC), which catalyzes the formation of peptide bonds, thereby polymerizing the amino acids delivered by tRNAs into a polypeptide chain. The nascent polypeptides leave the ribosome through a tunnel in the LSU and interact with protein factors that function in enzymatic processing, targeting, and the membrane insertion of nascent chains at the exit of the ribosomal tunnel. The chain is Small ribosomal subunit protein eS25B (rps2501) from Schizosaccharomyces pombe (strain 972 / ATCC 24843) (Fission yeast).